We begin with the raw amino-acid sequence, 264 residues long: Neurexophilin-2 (264 aa).

Positions 1 to 22 (MRLRPLPLVVVPGLLQLLFCDS) are cleaved as a signal peptide. The segment at 23–90 (EKVVHATEGL…WDWLANITEV (68 aa)) is II. N-linked (GlcNAc...) asparagine glycans are attached at residues asparagine 86, asparagine 139, asparagine 149, and asparagine 155. Residues 91-169 (QEPLARTKRR…LVPPSKVVEF (79 aa)) form an III region. The tract at residues 170-178 (EVSPQSTLE) is IV (linker domain). The segment at 179–264 (TKESKSFNCR…HSETPYLSSG (86 aa)) is v (Cys-rich).

It belongs to the neurexophilin family. Post-translationally, may be proteolytically processed at the boundary between the N-terminal non-conserved and the central conserved domain in neuron-like cells. As to expression, brain, only in a scattered subpopulation of neurons that probably represent inhibitory interneurons.

The protein localises to the secreted. May be signaling molecules that resemble neuropeptides and that act by binding to alpha-neurexins and possibly other receptors. The protein is Neurexophilin-2 (NXPH2) of Bos taurus (Bovine).